The primary structure comprises 462 residues: uncharacterized protein (462 aa).

Positions 1–108 are disordered; it reads MEDSNTNKDI…NGQDDQDEMD (108 aa). A compositionally biased stretch (basic and acidic residues) spans 36 to 51; the sequence is TVERILERKQKERESK. The span at 64–95 shows a compositional bias: low complexity; sequence SSPSSLLSSPISSNDNNNNNNNNNNESFDINN. Positions 119-150 form a coiled coil; the sequence is LLKRKAALAAKKKESLAEQMKKYNQQYDSIIS. The disordered stretch occupies residues 188–208; that stretch reads SKLQSLNNNTSPSTSSSNLID. The span at 190 to 208 shows a compositional bias: low complexity; that stretch reads LQSLNNNTSPSTSSSNLID.

This is an uncharacterized protein from Dictyostelium discoideum (Social amoeba).